The primary structure comprises 101 residues: ATP-dependent Clp protease adapter protein ClpS (101 aa).

It belongs to the ClpS family. As to quaternary structure, binds to the N-terminal domain of the chaperone ClpA.

Involved in the modulation of the specificity of the ClpAP-mediated ATP-dependent protein degradation. In Corynebacterium jeikeium (strain K411), this protein is ATP-dependent Clp protease adapter protein ClpS.